A 753-amino-acid polypeptide reads, in one-letter code: 5-methyltetrahydropteroyltriglutamate--homocysteine methyltransferase (753 aa).

5-methyltetrahydropteroyltri-L-glutamate-binding positions include 17 to 20 and Lys-117; that span reads RELK. Residues 431 to 433 and Glu-484 each bind L-homocysteine; that span reads IGS. Residues 431–433 and Glu-484 contribute to the L-methionine site; that span reads IGS. 5-methyltetrahydropteroyltri-L-glutamate-binding positions include 515-516 and Trp-561; that span reads RC. Asp-599 is an L-homocysteine binding site. Residue Asp-599 coordinates L-methionine. Glu-605 provides a ligand contact to 5-methyltetrahydropteroyltri-L-glutamate. The Zn(2+) site is built by His-641, Cys-643, and Glu-665. His-694 (proton donor) is an active-site residue. Cys-726 lines the Zn(2+) pocket.

Belongs to the vitamin-B12 independent methionine synthase family. Zn(2+) serves as cofactor.

The enzyme catalyses 5-methyltetrahydropteroyltri-L-glutamate + L-homocysteine = tetrahydropteroyltri-L-glutamate + L-methionine. It functions in the pathway amino-acid biosynthesis; L-methionine biosynthesis via de novo pathway; L-methionine from L-homocysteine (MetE route): step 1/1. Functionally, catalyzes the transfer of a methyl group from 5-methyltetrahydrofolate to homocysteine resulting in methionine formation. This Shigella flexneri protein is 5-methyltetrahydropteroyltriglutamate--homocysteine methyltransferase.